The chain runs to 646 residues: Sulfate transporter 3.2 (646 aa).

The Cytoplasmic segment spans residues 1 to 76 (MSSKRASQYH…GYSLEYLKSD (76 aa)). Residues 77–97 (VISGITIASLAIPQGISYAQL) form a helical membrane-spanning segment. Residues 98 to 99 (AN) lie on the Extracellular side of the membrane. Residues 100–120 (LPPILGLYSSLVPPLVYAIMG) traverse the membrane as a helical segment. Topologically, residues 121 to 124 (SSRD) are cytoplasmic. Residues 125–145 (LAVGTVAVASLLTAAMLGKEV) form a helical membrane-spanning segment. The Extracellular portion of the chain corresponds to 146–154 (NAVVNPKLY). Residues 155–175 (LHLAFTATFFAGLMQTCLGLL) form a helical membrane-spanning segment. Position 176 (Arg176) is a topological domain, cytoplasmic. A helical membrane pass occupies residues 177–197 (LGFVVEILSHAAIVGFMGGAA). The Extracellular portion of the chain corresponds to 198–235 (TVVCLQQLKGLLGLHHFTHSTDIVTVLRSIFSQSHMWR). Residues 236 to 256 (WESGVLGCCFLIFLLTTKYIS) traverse the membrane as a helical segment. Residues 257-262 (KKRPKL) lie on the Cytoplasmic side of the membrane. The chain crosses the membrane as a helical span at residues 263–283 (FWISAMSPLVSVIFGTIFLYF). Topologically, residues 284–315 (LHDQFHGIQFIGELKKGINPPSITHLVFTPPY) are extracellular. A helical membrane pass occupies residues 316 to 336 (VMLALKVGIITGVIALAEGIA). The Cytoplasmic portion of the chain corresponds to 337–354 (VGRSFAMYKNYNIDGNKE). Residues 355–375 (MIAFGMMNILGSFSSCYLTTG) form a helical membrane-spanning segment. Over 376–390 (PFSRSAVNYNAGCKT) the chain is Extracellular. 2 consecutive transmembrane segments (helical) span residues 391 to 411 (ALSN…LTPL) and 412 to 432 (FFYT…LGLV). Residues 433–447 (DYEAAIHLWKLDKFD) lie on the Extracellular side of the membrane. A helical transmembrane segment spans residues 448 to 468 (FFVCLSAYLGVVFGTIEIGLI). Residues 469–646 (LSVGISVMRL…DSPVPEFNNV (178 aa)) lie on the Cytoplasmic side of the membrane. The STAS domain occupies 504–627 (HYPQAITRSS…LTVAEAVAAC (124 aa)).

The protein belongs to the SLC26A/SulP transporter (TC 2.A.53) family. Expressed only in leaves.

Its subcellular location is the membrane. Functionally, h(+)/sulfate cotransporter that may play a role in the regulation of sulfate assimilation. The sequence is that of Sulfate transporter 3.2 (SULTR3;2) from Arabidopsis thaliana (Mouse-ear cress).